We begin with the raw amino-acid sequence, 248 residues long: ATP synthase subunit a, chloroplastic (248 aa).

The next 5 helical transmembrane spans lie at 38–58, 96–116, 135–155, 200–220, and 221–241; these read QVLI…TIAV, VPFI…GALL, INTT…AGLA, LVVA…VMFL, and GLFT…AYIG.

It belongs to the ATPase A chain family. As to quaternary structure, F-type ATPases have 2 components, CF(1) - the catalytic core - and CF(0) - the membrane proton channel. CF(1) has five subunits: alpha(3), beta(3), gamma(1), delta(1), epsilon(1). CF(0) has four main subunits: a, b, b' and c.

The protein localises to the plastid. It localises to the chloroplast thylakoid membrane. Functionally, key component of the proton channel; it plays a direct role in the translocation of protons across the membrane. This Cycas taitungensis (Prince sago) protein is ATP synthase subunit a, chloroplastic.